The chain runs to 425 residues: Inhibin beta A chain (425 aa).

An N-terminal signal peptide occupies residues Met1–Ser20. A propeptide spanning residues Ser21–Arg309 is cleaved from the precursor. Residue Asn165 is glycosylated (N-linked (GlcNAc...) asparagine). Positions Lys260–Arg289 are disordered. Positions Lys263–Glu275 are enriched in basic and acidic residues. 4 cysteine pairs are disulfide-bonded: Cys313–Cys321, Cys320–Cys390, Cys349–Cys422, and Cys353–Cys424.

This sequence belongs to the TGF-beta family. As to quaternary structure, dimeric, linked by one or more disulfide bonds. Inhibin A is a dimer of alpha/INHA and beta-A/INHBA. Activin A is a homodimer of beta-A/INHBA. Activin AB is a dimer of beta-A/INHBA and beta-B/INHBB. Interacts with FST and FSTL3; these interactions prevent activin A interaction to its type II receptor. Activin A interacts with ACVR2A. Activin A interacts with BMPR2. Inhibin A interacts with ACVR1; this interaction creates a non-signaling complex (NSC) that inhibits ACVR1-mediated BMP signaling. Inhibin A interacts with ACVR2A.

It is found in the secreted. In terms of biological role, inhibins/activins are involved in regulating a number of diverse functions such as hypothalamic and pituitary hormone secretion, gonadal hormone secretion, germ cell development and maturation, erythroid differentiation, insulin secretion, nerve cell survival, embryonic axial development or bone growth, depending on their subunit composition. Activin A is a homodimer of INHBA that plays a role in several essential biological processes including embryonic development, stem cell maintenance and differentiation, haematopoiesis, cell proliferation and tissue fibrosis. Signals through type I (such as ACVR1B or ACVR1C) and type II receptors (such as ACVR2A, ACVR2B or BMPR2) which, upon ligand binding, phosphorylate SMAD2 and SMAD3 intracellular signaling mediators that form a complex with SMAD4, translocate to the nucleus and modulate gene expression. Can also activate alternative non-canonical intracellular signaling pathways including the p38 MAPK, extracellular signal-regulated kinases 1/2 (ERK1/2) and c-Jun N-terminal kinases (JNKs) to modulate cell migration and differentiation. Alternatively, promotes osteoblastic differentiation via ACVRL1-SMAD1/5/9 pathway. In addition, can engage the type I receptor ACVR1 to form an ACVR1-activin A-type II receptor non-signaling complex (NSC) that renders receptors unavailable for engagement with BMPs, hence resulting in an apparent inhibition of ACVR1-mediated BMP signaling. Its function is as follows. Inhibin A is a dimer of alpha/INHA and beta-A/INHBA that functions as a feedback regulator in the hypothalamic-pituitary-gonadal (HPG) axis. Inhibits the secretion of FSH from the anterior pituitary gland by acting on pituitary gonadotrope cells. Antagonizes activin A by binding to the proteoglycan, betaglycan, and forming a stable complex with and, thereby, sequestering type II activin receptors while excluding type I receptor. This Ovis aries (Sheep) protein is Inhibin beta A chain (INHBA).